The following is a 253-amino-acid chain: ABC transporter D-alanine-binding periplasmic protein (253 aa).

The first 22 residues, 1-22, serve as a signal peptide directing secretion; the sequence is MLSKKFGLSMIVLGIMSSSAFA. The D-alanine site is built by Gly95, Ser97, Arg102, Ala147, and Glu191.

This sequence belongs to the bacterial solute-binding protein 3 family. As to quaternary structure, monomer.

The protein localises to the periplasm. In terms of biological role, part of the ABC transporter complex dalSTUV, that imports D-alanine into the cytoplasm. Helps protect the organism from oxidative killing by host neutrophils through sequestration of D-alanine, a substrate that is converted to hydrogen peroxide by the host enzyme DAO (D-amino acid oxidase). DalS shuttles D-alanine from the periplasm to the DalTUV complex situated in the inner membrane and through hydrolysis of ATP, D-alanine is transported across the membrane into the cytoplasm. Not required for the metabolism of D-alanine found in the stem peptide of peptidoglycan. The polypeptide is ABC transporter D-alanine-binding periplasmic protein (Salmonella typhimurium (strain LT2 / SGSC1412 / ATCC 700720)).